The sequence spans 350 residues: Ceramide synthase 1 (350 aa).

Alanine 2 is subject to N-acetylalanine. 6 consecutive transmembrane segments (helical) span residues 53–73 (AHLAPPELLLLALGALGWTAL), 103–123 (AWKFLFYLGSWSYSAYLLFGT), 148–168 (IAAAYLLQGSFYGHSIYATLY), 176–196 (SVVMLLHHVVTLILIVSSYAF), 239–259 (AADLGCLSFGFSWFWFRLYWF), and 287–307 (LLLLLTLMNLYWFLYIVAFAA). The TLC domain occupies 97-311 (AKMPESAWKF…IVAFAAKVLT (215 aa)).

In terms of processing, acetylated. Deacetylation by SIRT3 increases enzyme activity and promotes mitochondrial ceramide accumulation.

Its subcellular location is the endoplasmic reticulum membrane. The catalysed reaction is a sphingoid base + octadecanoyl-CoA = an N-octadecanoyl-sphingoid base + CoA + H(+). The enzyme catalyses sphinganine + octadecanoyl-CoA = N-(octadecanoyl)-sphinganine + CoA + H(+). It catalyses the reaction hexadecasphinganine + octadecanoyl-CoA = N-octadecanoylhexadecasphinganine + CoA + H(+). It carries out the reaction sphing-4-enine + octadecanoyl-CoA = N-octadecanoylsphing-4-enine + CoA + H(+). The catalysed reaction is heptadecasphing-4-enine + octadecanoyl-CoA = N-octadecanoyl-heptadecasphing-4-enine + CoA + H(+). The enzyme catalyses 2-hydroxyoctadecanoyl-CoA + sphinganine = N-(2-hydroxyoctadecanoyl)-sphinganine + CoA + H(+). It catalyses the reaction eicosanoyl-CoA + sphinganine = N-eicosanoylsphinganine + CoA + H(+). It functions in the pathway lipid metabolism; sphingolipid metabolism. Inhibited by fumonisin B1. Functionally, ceramide synthase that catalyzes the transfer of the acyl chain from acyl-CoA to a sphingoid base, with high selectivity toward stearoyl-CoA (octadecanoyl-CoA; C18:0-CoA). N-acylates sphinganine and sphingosine bases to form dihydroceramides and ceramides in de novo synthesis and salvage pathways, respectively. Plays a predominant role in skeletal muscle in regulating C18 ceramide and dihydroceramide levels with an impact on whole-body glucose metabolism and insulin sensitivity. Protects from diet-induced obesity by suppressing the uptake of glucose in multiple organs in a FGF21-dependent way. Generates C18 ceramides in the brain, playing a critical role in cerebellar development and Purkinje cell function. In response to cellular stress mediates mitophagy, a known defense mechanism against cell transformation and aging. Upon mitochondria fission, generates C18 ceramides that anchor lipidated MAP1LC3B/LC3B-II autophagolysosomes to outer mitochondrial membranes to eliminate damaged mitochondria. This chain is Ceramide synthase 1, found in Homo sapiens (Human).